The chain runs to 270 residues: Diaminopimelate epimerase (270 aa).

The substrate site is built by asparagine 15, glutamine 49, and asparagine 66. Cysteine 75 functions as the Proton donor in the catalytic mechanism. Substrate contacts are provided by residues 76–77 (GN), asparagine 155, asparagine 187, and 204–205 (ER). Cysteine 213 serves as the catalytic Proton acceptor. Substrate is bound at residue 214–215 (GS).

The protein belongs to the diaminopimelate epimerase family. In terms of assembly, homodimer.

It is found in the cytoplasm. It carries out the reaction (2S,6S)-2,6-diaminopimelate = meso-2,6-diaminopimelate. Its pathway is amino-acid biosynthesis; L-lysine biosynthesis via DAP pathway; DL-2,6-diaminopimelate from LL-2,6-diaminopimelate: step 1/1. Functionally, catalyzes the stereoinversion of LL-2,6-diaminopimelate (L,L-DAP) to meso-diaminopimelate (meso-DAP), a precursor of L-lysine and an essential component of the bacterial peptidoglycan. This chain is Diaminopimelate epimerase, found in Rickettsia typhi (strain ATCC VR-144 / Wilmington).